Consider the following 313-residue polypeptide: 3'-5' exoribonuclease YhaM (313 aa).

The segment at residues 22-90 (SSVKGTASNG…QLKIRQIRQA (69 aa)) is a DNA-binding region (OB). The region spanning 163–279 (HVVSMLRLAK…LHQIDLMDAS (117 aa)) is the HD domain.

Belongs to the YhaM family.

Shows a 3'-5' exoribonuclease activity. This chain is 3'-5' exoribonuclease YhaM, found in Listeria monocytogenes serovar 1/2a (strain ATCC BAA-679 / EGD-e).